A 596-amino-acid chain; its full sequence is NADH-quinone oxidoreductase subunit C/D (596 aa).

The segment at 1-186 is NADH dehydrogenase I subunit C; that stretch reads MVDIMCNDST…NPFILTKQKE (186 aa). The tract at residues 210-596 is NADH dehydrogenase I subunit D; that stretch reads NFMFLNLGPN…IDFVMSDVDR (387 aa).

It in the N-terminal section; belongs to the complex I 30 kDa subunit family. This sequence in the C-terminal section; belongs to the complex I 49 kDa subunit family. In terms of assembly, NDH-1 is composed of 13 different subunits. Subunits NuoB, CD, E, F, and G constitute the peripheral sector of the complex.

The protein resides in the cell inner membrane. It carries out the reaction a quinone + NADH + 5 H(+)(in) = a quinol + NAD(+) + 4 H(+)(out). Its function is as follows. NDH-1 shuttles electrons from NADH, via FMN and iron-sulfur (Fe-S) centers, to quinones in the respiratory chain. The immediate electron acceptor for the enzyme in this species is believed to be ubiquinone. Couples the redox reaction to proton translocation (for every two electrons transferred, four hydrogen ions are translocated across the cytoplasmic membrane), and thus conserves the redox energy in a proton gradient. This chain is NADH-quinone oxidoreductase subunit C/D, found in Blochmanniella pennsylvanica (strain BPEN).